The primary structure comprises 507 residues: Pyruvate kinase (507 aa).

Arg50 contributes to the substrate binding site. Residues Asn52, Ser54, Asp84, and Thr85 each contribute to the K(+) site. ATP is bound at residue 52 to 55 (NFSH). Residues Arg91 and Lys177 each coordinate ATP. Glu242 lines the Mg(2+) pocket. Residues Gly265, Asp266, and Thr298 each coordinate substrate. Asp266 is a Mg(2+) binding site.

This sequence belongs to the pyruvate kinase family. In terms of assembly, homotetramer. The cofactor is Mg(2+). K(+) is required as a cofactor.

The catalysed reaction is pyruvate + ATP = phosphoenolpyruvate + ADP + H(+). The protein operates within carbohydrate degradation; glycolysis; pyruvate from D-glyceraldehyde 3-phosphate: step 5/5. In Dictyostelium discoideum (Social amoeba), this protein is Pyruvate kinase (pyk).